The sequence spans 375 residues: Alcohol dehydrogenase 1C (375 aa).

Ser2 is subject to N-acetylserine. Ser23 carries the phosphoserine modification. Residues Cys47, His68, Cys98, Cys101, Cys104, Cys112, and Cys175 each coordinate Zn(2+). NAD(+)-binding positions include 200 to 205, Asp224, Lys229, Ile270, 293 to 295, 318 to 320, and Arg370; these read GLGGVG, VGV, and AIF.

Belongs to the zinc-containing alcohol dehydrogenase family. As to quaternary structure, dimer of identical or non-identical chains of class I alcohol dehydrogenase: ADH1A, ADH1B, and ADH1C. It depends on Zn(2+) as a cofactor.

It is found in the cytoplasm. The enzyme catalyses a primary alcohol + NAD(+) = an aldehyde + NADH + H(+). The catalysed reaction is ethanol + NAD(+) = acetaldehyde + NADH + H(+). In terms of biological role, alcohol dehydrogenase. Exhibits high activity for ethanol oxidation and plays a major role in ethanol catabolism. This is Alcohol dehydrogenase 1C (ADH1C) from Homo sapiens (Human).